A 527-amino-acid chain; its full sequence is Eukaryotic translation initiation factor 2 subunit gamma (527 aa).

The disordered stretch occupies residues 1–83 (MSDLQDQEPS…GLPEQPLNPD (83 aa)). Residue threonine 60 is modified to Phosphothreonine. Positions 98-307 (QATINIGTIG…IVKTIPVPPR (210 aa)) constitute a tr-type G domain. Residues 107–114 (GHVAHGKS) form a G1 region. 110-115 (AHGKST) is a binding site for GTP. The interval 135 to 139 (NITIK) is G2. Positions 193 to 196 (DCPG) are G3. 249–252 (NKVD) serves as a coordination point for GTP. Positions 249-252 (NKVD) are G4. Phosphoserine is present on serine 258. GTP is bound at residue 284–286 (SAQ). The G5 stretch occupies residues 284-286 (SAQ). The interacts with CDC123 stretch occupies residues 515 to 527 (ATIKKGTTLEPIA).

It belongs to the TRAFAC class translation factor GTPase superfamily. Classic translation factor GTPase family. EIF2G subfamily. As to quaternary structure, eukaryotic translation initiation factor 2 eIF2 is a heterotrimeric complex composed of an alpha, a beta and a gamma subunit. The factors eIF-1, eIF-1A, eIF-2, eIF-3, TIF5/eIF-5 and methionyl-tRNAi form a multifactor complex (MFC) that may bind to the 40S ribosome. Interacts (via C-terminus) with CDC123; the interaction is direct. Interacts with GCD1. Interacts with the eIF2B complex subunits GCD6 and GCD7. Interacts with methionyl-initiator methionine tRNA.

It localises to the cytoplasm. The protein resides in the cytosol. The catalysed reaction is GTP + H2O = GDP + phosphate + H(+). Functionally, as a subunit of eukaryotic initiation factor 2 eIF2, involved in the early steps of protein synthesis. In the presence of GTP, eIF-2 forms a ternary complex with initiator tRNA Met-tRNAi and then recruits the 40S ribosomal complex and initiation factors eIF-1, eIF-1A and eIF-3 to form the 43S pre-initiation complex (43S PIC), a step that determines the rate of protein translation. The 43S PIC binds to mRNA and scans downstream to the initiation codon, where it forms a 48S initiation complex by codon-anticodon base pairing. This leads to the displacement of eIF-1 to allow GTPase-activating protein (GAP) eIF-5-mediated hydrolysis of eIF2-bound GTP. Hydrolysis of GTP and release of Pi, which makes GTP hydrolysis irreversible, causes the release of the eIF-2-GDP binary complex from the 40S subunit, an event that is essential for the subsequent joining of the 60S ribosomal subunit to form an elongation-competent 80S ribosome. In order for eIF-2 to recycle and catalyze another round of initiation, the GDP bound to eIF-2 must be exchanged with GTP by way of a reaction catalyzed by GDP-GTP exchange factor (GEF) eIF-2B. The polypeptide is Eukaryotic translation initiation factor 2 subunit gamma (GCD11) (Saccharomyces cerevisiae (strain ATCC 204508 / S288c) (Baker's yeast)).